The following is a 513-amino-acid chain: GMP synthase [glutamine-hydrolyzing] (513 aa).

Residues 8–198 (MILVLDFGSQ…VFGVCECVGE (191 aa)) enclose the Glutamine amidotransferase type-1 domain. The active-site Nucleophile is cysteine 85. Catalysis depends on residues histidine 172 and glutamate 174. One can recognise a GMPS ATP-PPase domain in the interval 199–388 (WSMENFIEIE…LGIPDEIVWR (190 aa)). 226-232 (SGGVDSS) contributes to the ATP binding site.

Homodimer.

It carries out the reaction XMP + L-glutamine + ATP + H2O = GMP + L-glutamate + AMP + diphosphate + 2 H(+). It functions in the pathway purine metabolism; GMP biosynthesis; GMP from XMP (L-Gln route): step 1/1. In terms of biological role, catalyzes the synthesis of GMP from XMP. The chain is GMP synthase [glutamine-hydrolyzing] from Bacillus licheniformis (strain ATCC 14580 / DSM 13 / JCM 2505 / CCUG 7422 / NBRC 12200 / NCIMB 9375 / NCTC 10341 / NRRL NRS-1264 / Gibson 46).